Reading from the N-terminus, the 118-residue chain is DNA-binding protein YG5714_1868 (118 aa).

This sequence belongs to the PDCD5 family.

The sequence is that of DNA-binding protein YG5714_1868 from Saccharolobus islandicus (strain Y.G.57.14 / Yellowstone #1) (Sulfolobus islandicus).